The following is a 137-amino-acid chain: S-protein homolog 16 (137 aa).

An N-terminal signal peptide occupies residues Met-1–Gly-21. Asn-87 carries an N-linked (GlcNAc...) asparagine glycan.

It belongs to the plant self-incompatibility (S1) protein family.

The protein resides in the secreted. The polypeptide is S-protein homolog 16 (Arabidopsis thaliana (Mouse-ear cress)).